The following is a 236-amino-acid chain: Leucyl/phenylalanyl-tRNA--protein transferase (236 aa).

Residues 1–13 (MNSLSYLNQDQQS) show a composition bias toward polar residues. The segment at 1–22 (MNSLSYLNQDQQSFPPPEQALS) is disordered.

Belongs to the L/F-transferase family.

It localises to the cytoplasm. The catalysed reaction is N-terminal L-lysyl-[protein] + L-leucyl-tRNA(Leu) = N-terminal L-leucyl-L-lysyl-[protein] + tRNA(Leu) + H(+). It carries out the reaction N-terminal L-arginyl-[protein] + L-leucyl-tRNA(Leu) = N-terminal L-leucyl-L-arginyl-[protein] + tRNA(Leu) + H(+). It catalyses the reaction L-phenylalanyl-tRNA(Phe) + an N-terminal L-alpha-aminoacyl-[protein] = an N-terminal L-phenylalanyl-L-alpha-aminoacyl-[protein] + tRNA(Phe). Functionally, functions in the N-end rule pathway of protein degradation where it conjugates Leu, Phe and, less efficiently, Met from aminoacyl-tRNAs to the N-termini of proteins containing an N-terminal arginine or lysine. This chain is Leucyl/phenylalanyl-tRNA--protein transferase, found in Shewanella piezotolerans (strain WP3 / JCM 13877).